We begin with the raw amino-acid sequence, 232 residues long: Ornithine carbamoyltransferase (232 aa).

Residues Q15, R39, and 66–69 (HPTQ) each bind carbamoyl phosphate. Residues N99, D163, and 167-168 (SM) contribute to the L-ornithine site. Carbamoyl phosphate-binding positions include 204-207 (HCLP) and T232.

It belongs to the aspartate/ornithine carbamoyltransferase superfamily. OTCase family.

It is found in the cytoplasm. The enzyme catalyses carbamoyl phosphate + L-ornithine = L-citrulline + phosphate + H(+). It functions in the pathway amino-acid biosynthesis; L-arginine biosynthesis; L-arginine from L-ornithine and carbamoyl phosphate: step 1/3. In terms of biological role, reversibly catalyzes the transfer of the carbamoyl group from carbamoyl phosphate (CP) to the N(epsilon) atom of ornithine (ORN) to produce L-citrulline. This is Ornithine carbamoyltransferase (argF) from Neisseria pharyngis.